The following is a 510-amino-acid chain: Zinc finger protein 692 (510 aa).

Disordered stretches follow at residues 1–20 (MAAS…RQLD) and 121–306 (WGPS…EDTA). Position 161 is a phosphoserine (S161). Residues 163-172 (CDERAQEARM) are compositionally biased toward basic and acidic residues. A compositionally biased stretch (acidic residues) spans 188–201 (EDGEEEEEDEEEML). S225 bears the Phosphoserine mark. Over residues 237 to 265 (APAPAAVPAPLASPSSSASSLGSGAPGPV) the composition is skewed to low complexity. Over residues 278–297 (QADQQTEPLASPGSQAQSAL) the composition is skewed to polar residues. C2H2-type zinc fingers lie at residues 322-347 (LPCD…KYQH), 353-377 (FSCP…VKLH), 383-405 (YICE…RRIH), 411-433 (LQCE…RRKH), and 442-465 (FPCE…SKSH). Phosphoserine is present on S464.

This sequence belongs to the krueppel C2H2-type zinc-finger protein family. In terms of processing, phosphorylation at Ser-464 results in loss of DNA-binding activity.

The protein localises to the nucleus. May act as an transcriptional repressor for PCK1 gene expression, in turn may participate in the hepatic gluconeogenesis regulation through the activated AMPK signaling pathway. This Bos taurus (Bovine) protein is Zinc finger protein 692.